Here is a 492-residue protein sequence, read N- to C-terminus: NADH-quinone oxidoreductase subunit N (492 aa).

A run of 14 helical transmembrane segments spans residues 12–32, 44–64, 76–96, 115–135, 138–158, 169–189, 212–232, 244–264, 272–292, 306–326, 334–354, 381–401, 416–438, and 463–483; these read LLPY…MIAI, ISVV…AGII, LFVI…CALA, LYLL…AQHL, FFMS…YTYM, YLVL…FIYA, LILG…AAPF, PAPI…ALAV, LLAL…SILL, LLGY…VSIG, SMYM…VTLM, TAVM…AGFI, WFLA…RVLL, and IMVI…NSMI.

It belongs to the complex I subunit 2 family. As to quaternary structure, NDH-1 is composed of 14 different subunits. Subunits NuoA, H, J, K, L, M, N constitute the membrane sector of the complex.

It localises to the cell inner membrane. The catalysed reaction is a quinone + NADH + 5 H(+)(in) = a quinol + NAD(+) + 4 H(+)(out). In terms of biological role, NDH-1 shuttles electrons from NADH, via FMN and iron-sulfur (Fe-S) centers, to quinones in the respiratory chain. The immediate electron acceptor for the enzyme in this species is believed to be ubiquinone. Couples the redox reaction to proton translocation (for every two electrons transferred, four hydrogen ions are translocated across the cytoplasmic membrane), and thus conserves the redox energy in a proton gradient. The protein is NADH-quinone oxidoreductase subunit N of Psychrobacter arcticus (strain DSM 17307 / VKM B-2377 / 273-4).